A 216-amino-acid polypeptide reads, in one-letter code: ATP synthase subunit a (216 aa).

7 consecutive transmembrane segments (helical) span residues 1-21 (MEYS…IFVL), 62-82 (LIAA…VPGF), 88-108 (NINT…FEGF), 119-139 (FMGP…ISHI), 149-169 (LFAN…LVIK), 174-194 (LVVS…AIFI), and 196-216 (TYIF…HEEH).

It belongs to the ATPase A chain family. As to quaternary structure, F-type ATPases have 2 components, CF(1) - the catalytic core - and CF(0) - the membrane proton channel. CF(1) has five subunits: alpha(3), beta(3), gamma(1), delta(1), epsilon(1). CF(0) has three main subunits: a(1), b(2) and c(9-12). The alpha and beta chains form an alternating ring which encloses part of the gamma chain. CF(1) is attached to CF(0) by a central stalk formed by the gamma and epsilon chains, while a peripheral stalk is formed by the delta and b chains.

The protein resides in the cell inner membrane. Functionally, key component of the proton channel; it plays a direct role in the translocation of protons across the membrane. The chain is ATP synthase subunit a from Aquifex aeolicus (strain VF5).